Here is a 687-residue protein sequence, read N- to C-terminus: Putative mitochondrial carnitine O-acetyltransferase (687 aa).

The Proton acceptor role is filled by His346. Position 446 to 459 (446 to 459 (GASHIKTVFKCSPD)) interacts with CoA. Positions 481 and 494 each coordinate (R)-carnitine. The residue at position 517 (Ser517) is a Phosphoserine.

The protein belongs to the carnitine/choline acetyltransferase family.

Its subcellular location is the mitochondrion inner membrane. The catalysed reaction is (R)-carnitine + acetyl-CoA = O-acetyl-(R)-carnitine + CoA. Its function is as follows. Involved in the transfer of acetyl-CoA into mitochondria. May also be involved in the metabolism of acetate and of ethanol. This is Putative mitochondrial carnitine O-acetyltransferase (YAT1) from Saccharomyces cerevisiae (strain ATCC 204508 / S288c) (Baker's yeast).